The chain runs to 395 residues: Gastric triacylglycerol lipase (395 aa).

Positions 1 to 18 are cleaved as a signal peptide; that stretch reads MWLLLITSVISTFGGAHG. 3 N-linked (GlcNAc...) asparagine glycosylation sites follow: Asn-33, Asn-68, and Asn-98. Positions 77-376 constitute an AB hydrolase-1 domain; the sequence is PVVYLQHGLI…LAYNHLDFIW (300 aa). The Nucleophile role is filled by Ser-171. Cys-245 and Cys-254 are disulfide-bonded. Residue Asn-270 is glycosylated (N-linked (GlcNAc...) asparagine). Active-site charge relay system residues include Asp-342 and His-371.

This sequence belongs to the AB hydrolase superfamily. Lipase family. In terms of tissue distribution, secreted by the serous (von Ebner's) glands at the back of the rat tongue.

The protein resides in the secreted. The catalysed reaction is a triacylglycerol + H2O = a diacylglycerol + a fatty acid + H(+). It catalyses the reaction 1,2,3-tri-(9Z-octadecenoyl)-glycerol + H2O = 1,2-di-(9Z-octadecenoyl)-sn-glycerol + (9Z)-octadecenoate + H(+). The enzyme catalyses 1,2,3-trioctanoylglycerol + H2O = 1,2-dioctanoyl-sn-glycerol + octanoate + H(+). Catalyzes the hydrolysis of triacylglycerols to yield free fatty acids, diacylglycerol, monoacylglycerol, and glycerol. Shows a preferential hydrolysis at the sn-3 position of triacylglycerol. The sequence is that of Gastric triacylglycerol lipase (Lipf) from Rattus norvegicus (Rat).